Reading from the N-terminus, the 461-residue chain is UPF0210 protein LCABL_10110 (461 aa).

This sequence belongs to the UPF0210 family. In terms of assembly, homodimer.

The chain is UPF0210 protein LCABL_10110 from Lacticaseibacillus casei (strain BL23) (Lactobacillus casei).